The chain runs to 292 residues: MAFMKKYLLPILGIFLAYYYYSANEEFRPEMLRGKRVIVTGASKGIGREMAYHLARMGAHVVVTARSEESLKKVVSRCLELGAASAHYVAGTMENMTFAEQFVAKAGELVGGLDMLILNHIHYTPLGVFSNDIHLLRRTLEVNLLSYVVLSTAALPMLKQTNGSIVVVSSIAGKIACPLVAAYSASKFALDGFFSSLRMEYEATKVNVSITLCILGLIDTDTAMKAVAGIFNAKASPKEECALEIIKGGTLRQDEVYYDSSILTPLLLRNPGRKIMEFFFLKKYNMERFINN.

The helical transmembrane segment at 7-24 threads the bilayer; sequence YLLPILGIFLAYYYYSAN.

It belongs to the short-chain dehydrogenases/reductases (SDR) family. Homodimer. Expressed highest in liver and ovaries (corpora lutea, granulosa cells, thecal, uterine caruncle and intercarunculer tissues), lower expression in kidney and spleen, and lowest in the adrenal.

It is found in the endoplasmic reticulum membrane. The enzyme catalyses an 11beta-hydroxysteroid + NADP(+) = an 11-oxosteroid + NADPH + H(+). It catalyses the reaction corticosterone + NADP(+) = 11-dehydrocorticosterone + NADPH + H(+). It carries out the reaction cortisone + NADPH + H(+) = cortisol + NADP(+). The catalysed reaction is a 7beta-hydroxysteroid + NADP(+) = a 7-oxosteroid + NADPH + H(+). The enzyme catalyses 7-oxocholesterol + NADPH + H(+) = 7beta-hydroxycholesterol + NADP(+). It catalyses the reaction chenodeoxycholate + NADP(+) = 7-oxolithocholate + NADPH + H(+). It carries out the reaction 7-oxolithocholate + NADPH + H(+) = ursodeoxycholate + NADP(+). The catalysed reaction is glycochenodeoxycholate + NADP(+) = 7-oxoglycolithocholate + NADPH + H(+). The enzyme catalyses taurochenodeoxycholate + NADP(+) = 7-oxotaurolithocholate + NADPH + H(+). It catalyses the reaction tauroursodeoxycholate + NADP(+) = 7-oxotaurolithocholate + NADPH + H(+). It carries out the reaction glycoursodeoxycholate + NADP(+) = 7-oxoglycolithocholate + NADPH + H(+). The catalysed reaction is 7-oxopregnenolone + NADPH + H(+) = 7beta-hydroxypregnenolone + NADP(+). The enzyme catalyses 3beta,7alpha-dihydroxyandrost-5-en-17-one + NADP(+) = 3beta-hydroxy-5-androstene-7,17-dione + NADPH + H(+). It catalyses the reaction 3beta-hydroxy-5-androstene-7,17-dione + NADPH + H(+) = 3beta,7beta-dihydroxyandrost-5-en-17-one + NADP(+). It carries out the reaction 3beta-hydroxy-5alpha-androstane-7,17-dione + NADPH + H(+) = 3beta,7beta-dihydroxy-5alpha-androstan-17-one + NADP(+). Controls the reversible conversion of biologically active glucocorticoids such as cortisone to cortisol, and 11-dehydrocorticosterone to corticosterone in the presence of NADP(H). Participates in the corticosteroid receptor-mediated anti-inflammatory response, as well as metabolic and homeostatic processes. Plays a role in the secretion of aqueous humor in the eye, maintaining a normotensive, intraocular environment. Bidirectional in vitro, predominantly functions as a reductase in vivo, thereby increasing the concentration of active glucocorticoids. It has broad substrate specificity, besides glucocorticoids, it accepts other steroid and sterol substrates. Interconverts 7-oxo- and 7-hydroxy-neurosteroids such as 7-oxopregnenolone and 7beta-hydroxypregnenolone, 7-oxodehydroepiandrosterone (3beta-hydroxy-5-androstene-7,17-dione) and 7beta-hydroxydehydroepiandrosterone (3beta,7beta-dihydroxyandrost-5-en-17-one), among others. Catalyzes the stereo-specific conversion of the major dietary oxysterol, 7-ketocholesterol (7-oxocholesterol), into the more polar 7-beta-hydroxycholesterol metabolite. 7-oxocholesterol is one of the most important oxysterols, it participates in several events such as induction of apoptosis, accumulation in atherosclerotic lesions, lipid peroxidation, and induction of foam cell formation. Mediates the 7-oxo reduction of 7-oxolithocholate mainly to chenodeoxycholate, and to a lesser extent to ursodeoxycholate, both in its free form and when conjugated to glycine or taurine, providing a link between glucocorticoid activation and bile acid metabolism. Catalyzes the synthesis of 7-beta-25-dihydroxycholesterol from 7-oxo-25-hydroxycholesterol in vitro, which acts as a ligand for the G-protein-coupled receptor (GPCR) Epstein-Barr virus-induced gene 2 (EBI2) and may thereby regulate immune cell migration. The polypeptide is 11-beta-hydroxysteroid dehydrogenase 1 (Bos taurus (Bovine)).